We begin with the raw amino-acid sequence, 156 residues long: Lipoprotein signal peptidase (156 aa).

3 helical membrane passes run 5–25, 64–84, and 89–109; these read FKFI…DQWV, YLHL…KTLL, and IAFG…FIHG. Catalysis depends on residues Asp-113 and Asp-130. The chain crosses the membrane as a helical span at residues 122 to 142; it reads NFAIFNVADVMINISVALILI.

Belongs to the peptidase A8 family.

The protein resides in the cell inner membrane. It carries out the reaction Release of signal peptides from bacterial membrane prolipoproteins. Hydrolyzes -Xaa-Yaa-Zaa-|-(S,diacylglyceryl)Cys-, in which Xaa is hydrophobic (preferably Leu), and Yaa (Ala or Ser) and Zaa (Gly or Ala) have small, neutral side chains.. It participates in protein modification; lipoprotein biosynthesis (signal peptide cleavage). This protein specifically catalyzes the removal of signal peptides from prolipoproteins. This Campylobacter jejuni subsp. jejuni serotype O:23/36 (strain 81-176) protein is Lipoprotein signal peptidase.